The following is a 613-amino-acid chain: RUN domain-containing protein 1 (613 aa).

Positions 15-36 (AAVGPKAKDEEEEEEEPLPPCE) are disordered. Thr54 carries the post-translational modification Phosphothreonine. The span at 57-69 (LEEATAEEPGAAP) shows a compositional bias: low complexity. Disordered stretches follow at residues 57-79 (LEEA…PGRT), 140-177 (YEGP…RLET), and 305-330 (GKTG…KAED). Phosphoserine occurs at positions 71 and 75. Over residues 159–177 (PWLRGEDQSEQEKQERLET) the composition is skewed to basic and acidic residues. A coiled-coil region spans residues 160-235 (WLRGEDQSEQ…IKKLDMNLNE (76 aa)). Positions 309–325 (NGCSRTGSSRTPPGNSK) are enriched in polar residues. An RUN domain is found at 421–602 (ELTMAVRKEL…LKFSLPVDLA (182 aa)). Ser497 is modified (phosphoserine).

In terms of biological role, may play a role as p53/TP53 inhibitor and thus may have oncogenic activity. In Homo sapiens (Human), this protein is RUN domain-containing protein 1 (RUNDC1).